The chain runs to 534 residues: Putative ammonium transporter 1 (534 aa).

The next 11 helical transmembrane spans lie at 31-51, 69-89, 115-135, 139-159, 184-204, 223-243, 263-283, 291-311, 318-338, 346-366, and 401-421; these read SFFL…FAYL, LLDS…LAYG, FFFQ…AVAE, FITY…VLTH, FAGS…AAWI, ILGH…FGFL, ALAM…YLGV, WTLL…CAGC, ACIW…KLMI, LDAF…SSII, and ICAL…FWIL.

This sequence belongs to the ammonia transporter channel (TC 1.A.11.2) family.

The protein resides in the membrane. Its function is as follows. Involved in the uptake of ammonia. In Caenorhabditis elegans, this protein is Putative ammonium transporter 1 (amt-1).